Consider the following 124-residue polypeptide: Nucleoid-associated protein Noca_0318 (124 aa).

The protein belongs to the YbaB/EbfC family. Homodimer.

It localises to the cytoplasm. The protein localises to the nucleoid. Binds to DNA and alters its conformation. May be involved in regulation of gene expression, nucleoid organization and DNA protection. This is Nucleoid-associated protein Noca_0318 from Nocardioides sp. (strain ATCC BAA-499 / JS614).